A 246-amino-acid chain; its full sequence is tRNA (guanine-N(1)-)-methyltransferase (246 aa).

S-adenosyl-L-methionine-binding positions include Gly-113 and 133–138 (IGDYVL).

It belongs to the RNA methyltransferase TrmD family. In terms of assembly, homodimer.

It localises to the cytoplasm. The catalysed reaction is guanosine(37) in tRNA + S-adenosyl-L-methionine = N(1)-methylguanosine(37) in tRNA + S-adenosyl-L-homocysteine + H(+). In terms of biological role, specifically methylates guanosine-37 in various tRNAs. This chain is tRNA (guanine-N(1)-)-methyltransferase, found in Haemophilus influenzae (strain PittGG).